We begin with the raw amino-acid sequence, 170 residues long: Peptide deformylase (170 aa).

Cys-91 and His-133 together coordinate Fe cation. Residue Glu-134 is part of the active site. His-137 contributes to the Fe cation binding site.

This sequence belongs to the polypeptide deformylase family. Fe(2+) is required as a cofactor.

It carries out the reaction N-terminal N-formyl-L-methionyl-[peptide] + H2O = N-terminal L-methionyl-[peptide] + formate. Its function is as follows. Removes the formyl group from the N-terminal Met of newly synthesized proteins. Requires at least a dipeptide for an efficient rate of reaction. N-terminal L-methionine is a prerequisite for activity but the enzyme has broad specificity at other positions. This is Peptide deformylase from Aeromonas salmonicida (strain A449).